The primary structure comprises 1138 residues: Myelin regulatory factor (1138 aa).

The Cytoplasmic segment spans residues 1 to 768 (MEVVDETEAL…CISQRFLQGT (768 aa)). 4 disordered regions span residues 56 to 150 (TASF…YSPQ), 171 to 200 (VSSR…HYPV), 246 to 267 (AELP…NTLN), and 279 to 339 (PGTV…SDSL). Over residues 67–88 (PGSSGLHHLSPPGSGPSPGRHG) the composition is skewed to low complexity. At lysine 123 the chain carries N6-acetyllysine. Pro residues predominate over residues 178–198 (PPPPPAHLPGPPPPPPPPPHY). The NDT80 DNA-binding region spans 250–541 (PHPSKKRKHS…SNPGQFESDS (292 aa)). A Nuclear localization signal motif is present at residues 254-257 (KKRK). Residues 286–302 (PPHPARAPSPPWPPQGP) show a composition bias toward pro residues. Residues 329-339 (SPGLLQDSDSL) show a composition bias toward low complexity. The Nuclear localization signal signature appears at 491-494 (KKGK). The Peptidase S74 domain maps to 587–696 (SDLRAKEHVQ…KLTDNLETRI (110 aa)). A coiled-coil region spans residues 680–711 (GAVKELCKLTDNLETRIDELERWSHKLAKLRR). A compositionally biased stretch (polar residues) spans 721-733 (SGAFSHAGSQFSR). The interval 721–753 (SGAFSHAGSQFSRAGSVPHKKRPPKLANKSSPA) is disordered. The interval 765–1003 (LQGTIIALVV…QGQLDPAPSL (239 aa)) is required for interaction with TMEM98. A helical transmembrane segment spans residues 769–789 (IIALVVVMAFSVVSMSTLYVL). The Lumenal segment spans residues 790–1138 (SLRSEEDLVD…YYFHFYRLCD (349 aa)). Over residues 891–900 (ATDPALGPTL) the composition is skewed to low complexity. 2 disordered regions span residues 891–922 (ATDP…APLP) and 951–999 (ASPV…QLDP). Composition is skewed to polar residues over residues 961–974 (QSKT…NLQS) and 987–999 (PAQF…QLDP). Residues asparagine 1030, asparagine 1052, and asparagine 1116 are each glycosylated (N-linked (GlcNAc...) asparagine).

The protein belongs to the MRF family. Homotrimer. Interacts (via C-terminal region) with TMEM98; the interaction inhibits MYRF self-cleavage. In terms of processing, glycosylated. Post-translationally, follows autocatalytic cleavage via the peptidase S74 domain. Autoprocessing is apparently constitutive and is essential for transcriptional activity. Autocatalytic cleavage is inhibited by interaction with TMEM98. Specifically expressed by postmitotic oligodendrocytes in the CNS. Not detected in the peripheral nervous system (PNS).

Its subcellular location is the endoplasmic reticulum membrane. It localises to the nucleus. It is found in the cytoplasm. Its function is as follows. Constitutes a precursor of the transcription factor. Mediates the autocatalytic cleavage that releases the Myelin regulatory factor, N-terminal component that specifically activates transcription of central nervous system (CNS) myelin genes. Membrane-bound part that has no transcription factor activity and remains attached to the endoplasmic reticulum membrane following cleavage. Functionally, transcription factor that specifically activates expression of myelin genes such as MBP, MOG, MAG, DUSP15 and PLP1 during oligodendrocyte (OL) maturation, thereby playing a central role in oligodendrocyte maturation and CNS myelination. Specifically recognizes and binds DNA sequence 5'-CTGGYAC-3' in the regulatory regions of myelin-specific genes and directly activates their expression. Not only required during oligodendrocyte differentiation but is also required on an ongoing basis for the maintenance of expression of myelin genes and for the maintenance of a mature, viable oligodendrocyte phenotype. The polypeptide is Myelin regulatory factor (Myrf) (Mus musculus (Mouse)).